Consider the following 575-residue polypeptide: NEDD4-binding protein 2-like 2 (575 aa).

Composition is skewed to basic and acidic residues over residues 69 to 87 (QEDKTSTDVLKPLHKEMPG), 129 to 142 (PPEKKKCRERKSET), and 149 to 167 (DSKRRQEEKQKSNSKKLEM). Disordered stretches follow at residues 69–169 (QEDK…EMDT) and 555–575 (GEQRWGGSLGSHSQVSIADDY). Positions 162–194 (SKKLEMDTELSQFYKEIEELENENEASQGSCTE) form a coiled coil. Residues 564 to 575 (GSHSQVSIADDY) are compositionally biased toward polar residues.

In Mus musculus (Mouse), this protein is NEDD4-binding protein 2-like 2 (N4bp2l2).